The sequence spans 555 residues: Protein peste (555 aa).

The Cytoplasmic segment spans residues 1–7 (MTSRTRH). A helical transmembrane segment spans residues 8-28 (CARLGIVLLGICCIASGIYLF). Topologically, residues 29 to 434 (RNWIDMFTRM…VRVSEEIAAD (406 aa)) are extracellular. Residues N70, N110, N129, N213, N242, N312, and N342 are each glycosylated (N-linked (GlcNAc...) asparagine). The chain crosses the membrane as a helical span at residues 435–455 (IALVPLIVLLGQIVTGILLAG). The Cytoplasmic portion of the chain corresponds to 456-555 (GLICTCWYPT…SEDSPDVVVR (100 aa)).

Belongs to the CD36 family.

The protein localises to the cell membrane. (Microbial infection) Plays a role in mycobacterial infection. Mediates infection by M.fortuitum and uptake of M.smegmatis. The protein is Protein peste of Drosophila melanogaster (Fruit fly).